The following is a 158-amino-acid chain: Rhombotin-2 (158 aa).

LIM zinc-binding domains lie at C30–G89 and C94–K153.

Interacts via its LIM domains with ELF2 and LDB1. Interacts with BEX2 and KDM5A. Also interacts with basic helix-loop-helix protein TAL1/SCL and can assemble in a complex with LMO2 and TAL1/SCL.

It is found in the nucleus. Its function is as follows. Acts with TAL1/SCL to regulate red blood cell development. Also acts with LDB1 to maintain erythroid precursors in an immature state. The protein is Rhombotin-2 (LMO2) of Bos taurus (Bovine).